We begin with the raw amino-acid sequence, 298 residues long: Glycine--tRNA ligase alpha subunit (298 aa).

The protein belongs to the class-II aminoacyl-tRNA synthetase family. In terms of assembly, tetramer of two alpha and two beta subunits.

The protein resides in the cytoplasm. The catalysed reaction is tRNA(Gly) + glycine + ATP = glycyl-tRNA(Gly) + AMP + diphosphate. The polypeptide is Glycine--tRNA ligase alpha subunit (Neisseria meningitidis serogroup C / serotype 2a (strain ATCC 700532 / DSM 15464 / FAM18)).